The sequence spans 465 residues: Neuraminidase (465 aa).

Residues 1–11 (MLPSTIQTLTL) lie on the Intravirion side of the membrane. The helical transmembrane segment at 12–34 (FLTSGGVLLSLYVSASLSYLLYS) threads the bilayer. The segment at 13–35 (LTSGGVLLSLYVSASLSYLLYSD) is involved in apical transport and lipid raft association. Topologically, residues 35–465 (DILLKFSSKI…DTVTGVDMAL (431 aa)) are virion surface. The hypervariable stalk region stretch occupies residues 38–85 (LKFSSKITAPTMTLDCANASNVQAVNRSATKEMTFLLPEPEWTYPRLS). N-linked (GlcNAc...) asparagine; by host glycosylation is found at asparagine 55 and asparagine 63. 8 disulfides stabilise this stretch: cysteine 86–cysteine 419, cysteine 121–cysteine 126, cysteine 181–cysteine 228, cysteine 230–cysteine 235, cysteine 276–cysteine 290, cysteine 278–cysteine 288, cysteine 317–cysteine 336, and cysteine 423–cysteine 446. A head of neuraminidase region spans residues 88–465 (GSTFQKALLI…DTVTGVDMAL (378 aa)). Arginine 115 serves as a coordination point for substrate. Asparagine 143 carries an N-linked (GlcNAc...) asparagine; by host glycan. The active-site Proton donor/acceptor is the aspartate 148. Arginine 149 contributes to the substrate binding site. Substrate is bound at residue 274–275 (EE). A glycan (N-linked (GlcNAc...) asparagine; by host) is linked at asparagine 283. Residue arginine 291 coordinates substrate. 5 residues coordinate Ca(2+): aspartate 292, threonine 296, aspartate 323, glycine 343, and glycine 345. Arginine 373 serves as a coordination point for substrate. Residue tyrosine 408 is the Nucleophile of the active site.

Belongs to the glycosyl hydrolase 34 family. As to quaternary structure, homotetramer. Ca(2+) serves as cofactor. Post-translationally, N-glycosylated.

It is found in the virion membrane. The protein localises to the host apical cell membrane. The catalysed reaction is Hydrolysis of alpha-(2-&gt;3)-, alpha-(2-&gt;6)-, alpha-(2-&gt;8)- glycosidic linkages of terminal sialic acid residues in oligosaccharides, glycoproteins, glycolipids, colominic acid and synthetic substrates.. Its activity is regulated as follows. Inhibited by the neuraminidase inhibitors zanamivir (Relenza) and oseltamivir (Tamiflu). These drugs interfere with the release of progeny virus from infected cells and are effective against all influenza strains. Resistance to neuraminidase inhibitors is quite rare. Catalyzes the removal of terminal sialic acid residues from viral and cellular glycoconjugates. Cleaves off the terminal sialic acids on the glycosylated HA during virus budding to facilitate virus release. Additionally helps virus spread through the circulation by further removing sialic acids from the cell surface. These cleavages prevent self-aggregation and ensure the efficient spread of the progeny virus from cell to cell. Otherwise, infection would be limited to one round of replication. Described as a receptor-destroying enzyme because it cleaves a terminal sialic acid from the cellular receptors. May facilitate viral invasion of the upper airways by cleaving the sialic acid moieties on the mucin of the airway epithelial cells. Likely to plays a role in the budding process through its association with lipid rafts during intracellular transport. May additionally display a raft-association independent effect on budding. Plays a role in the determination of host range restriction on replication and virulence. Sialidase activity in late endosome/lysosome traffic seems to enhance virus replication. This chain is Neuraminidase, found in Influenza B virus (strain B/Beijing/1/1987).